Here is a 438-residue protein sequence, read N- to C-terminus: UDP-N-acetylmuramoylalanine--D-glutamate ligase (438 aa).

112–118 (GSNGKST) lines the ATP pocket.

Belongs to the MurCDEF family.

The protein localises to the cytoplasm. It catalyses the reaction UDP-N-acetyl-alpha-D-muramoyl-L-alanine + D-glutamate + ATP = UDP-N-acetyl-alpha-D-muramoyl-L-alanyl-D-glutamate + ADP + phosphate + H(+). The protein operates within cell wall biogenesis; peptidoglycan biosynthesis. In terms of biological role, cell wall formation. Catalyzes the addition of glutamate to the nucleotide precursor UDP-N-acetylmuramoyl-L-alanine (UMA). The protein is UDP-N-acetylmuramoylalanine--D-glutamate ligase of Escherichia coli O6:K15:H31 (strain 536 / UPEC).